Reading from the N-terminus, the 331-residue chain is Adenosine deaminase (331 aa).

Residues His12 and His14 each coordinate Zn(2+). 3 residues coordinate substrate: His14, Asp16, and Gly170. Residue His197 participates in Zn(2+) binding. Glu200 functions as the Proton donor in the catalytic mechanism. Zn(2+) is bound at residue Asp278. A substrate-binding site is contributed by Asp279.

It belongs to the metallo-dependent hydrolases superfamily. Adenosine and AMP deaminases family. Adenosine deaminase subfamily. Zn(2+) is required as a cofactor.

It carries out the reaction adenosine + H2O + H(+) = inosine + NH4(+). It catalyses the reaction 2'-deoxyadenosine + H2O + H(+) = 2'-deoxyinosine + NH4(+). In terms of biological role, catalyzes the hydrolytic deamination of adenosine and 2-deoxyadenosine. This chain is Adenosine deaminase, found in Shewanella baltica (strain OS185).